Here is a 268-residue protein sequence, read N- to C-terminus: Bis(5'-nucleosyl)-tetraphosphatase, symmetrical (268 aa).

Belongs to the Ap4A hydrolase family.

It carries out the reaction P(1),P(4)-bis(5'-adenosyl) tetraphosphate + H2O = 2 ADP + 2 H(+). Its function is as follows. Hydrolyzes diadenosine 5',5'''-P1,P4-tetraphosphate to yield ADP. The polypeptide is Bis(5'-nucleosyl)-tetraphosphatase, symmetrical (Vibrio campbellii (strain ATCC BAA-1116)).